Consider the following 701-residue polypeptide: Nucleolar transcription factor 1-B (701 aa).

The tract at residues methionine 1–glutamine 21 is disordered. 5 DNA-binding regions (HMG box) span residues proline 112–arginine 180, proline 196–methionine 264, threonine 298–leucine 362, proline 422–arginine 489, and lysine 508–methionine 574. The segment at methionine 382–lysine 426 is disordered. Residues glutamine 408–lysine 426 show a composition bias toward basic and acidic residues. The interval alanine 584 to asparagine 701 is disordered. The segment covering threonine 597–serine 612 has biased composition (polar residues). Residues aspartate 615 to glutamate 682 show a composition bias toward acidic residues. Residues serine 683–serine 695 show a composition bias toward low complexity.

XUBF consists of 2 polypeptides of 82 and 85 kDa, encoded by the same or closely related genes.

The protein localises to the nucleus. Functionally, UBF recognizes the ribosomal RNA gene promotor and activates transcription mediated by RNA polymerase I through cooperative interactions with the species-specific factor SL1. It binds specifically to the upstream control element. In Xenopus laevis (African clawed frog), this protein is Nucleolar transcription factor 1-B (ubtf-b).